We begin with the raw amino-acid sequence, 84 residues long: MKLLYLFLAILLAIEEPVISGKRHILRCMGNSGICRASCKKNEQPYLYCRNCQSCCLQSYMRISISGKEENTDWSYEKQWPRLP.

The N-terminal stretch at 1–21 (MKLLYLFLAILLAIEEPVISG) is a signal peptide. Disulfide bonds link cysteine 28/cysteine 55, cysteine 35/cysteine 49, and cysteine 39/cysteine 56.

Belongs to the beta-defensin family. In terms of tissue distribution, abundant expression in the male reproductive tract only. Abundant expressed in testis and the caput region of epididymis, but low in the corpus region.

Its subcellular location is the secreted. In terms of biological role, has antibacterial activity. This is Beta-defensin 119 (DEFB119) from Homo sapiens (Human).